The chain runs to 85 residues: Beta-insect depressant toxin Lqh-dprIT3c (85 aa).

The signal sequence occupies residues 1–21 (MKLLLLLTISASMLIEGLVNA). In terms of domain architecture, LCN-type CS-alpha/beta spans 22 to 82 (DGYIRGGDGC…EWDYETNTCG (61 aa)). 4 disulfide bridges follow: C31-C81, C35-C56, C42-C63, and C46-C65. G82 is modified (glycine amide).

The protein belongs to the long (4 C-C) scorpion toxin superfamily. Sodium channel inhibitor family. Beta subfamily. Expressed by the venom gland.

It is found in the secreted. Functionally, depressant insect beta-toxins cause a transient contraction paralysis followed by a slow flaccid paralysis. They bind voltage-independently at site-4 of sodium channels (Nav) and block action potentials, primarily by depolarizing the axonal membrane and suppressing the sodium current. This depressant toxin is active only on insects. It is found in a relatively small amount in the venom, and its activity on insects is 10-fold higher compared to other known depressant toxins. The polypeptide is Beta-insect depressant toxin Lqh-dprIT3c (Leiurus hebraeus (Hebrew deathstalker scorpion)).